The primary structure comprises 548 residues: Membrane protein insertase YidC (548 aa).

A helical transmembrane segment spans residues 6–26; that stretch reads NLLVIALLFVSFMIWQAWEQD. Residues 28 to 55 form a disordered region; it reads NPQPQAQQTTQTTTTAAGSAADQGVPAS. Residues 30-50 show a composition bias toward low complexity; sequence QPQAQQTTQTTTTAAGSAADQ. The next 4 helical transmembrane spans lie at 350-370, 420-440, 458-478, and 499-519; these read FVGN…GIMY, LGGC…YYML, LSAQ…MFFI, and PVIF…YYIV.

It belongs to the OXA1/ALB3/YidC family. Type 1 subfamily. Interacts with the Sec translocase complex via SecD. Specifically interacts with transmembrane segments of nascent integral membrane proteins during membrane integration.

It is found in the cell inner membrane. Functionally, required for the insertion and/or proper folding and/or complex formation of integral membrane proteins into the membrane. Involved in integration of membrane proteins that insert both dependently and independently of the Sec translocase complex, as well as at least some lipoproteins. Aids folding of multispanning membrane proteins. The sequence is that of Membrane protein insertase YidC from Shigella dysenteriae serotype 1 (strain Sd197).